We begin with the raw amino-acid sequence, 101 residues long: Large ribosomal subunit protein bL21 (101 aa).

This sequence belongs to the bacterial ribosomal protein bL21 family. Part of the 50S ribosomal subunit. Contacts protein L20.

This protein binds to 23S rRNA in the presence of protein L20. The sequence is that of Large ribosomal subunit protein bL21 from Anaeromyxobacter dehalogenans (strain 2CP-1 / ATCC BAA-258).